The sequence spans 226 residues: Respiratory nitrate reductase 2 gamma chain (226 aa).

The Periplasmic segment spans residues 1–4 (MIQY). The helical transmembrane segment at 5-30 (LNVFFYDIYPYICATVFFLGSWLRYD) threads the bilayer. The Cytoplasmic portion of the chain corresponds to 31 to 48 (YGQYTWRASSSQMLDKRG). Residues 49 to 71 (MVIWSNLFHIGILGIFFGHLFGM) form a helical membrane-spanning segment. Residues histidine 57 and histidine 67 each coordinate heme b. At 72 to 83 (LTPHWMYAWFLP) the chain is on the periplasmic side. A helical membrane pass occupies residues 84 to 113 (VAAKQLMAMVLGGICGVLTLIGGAGLLWRR). The Cytoplasmic segment spans residues 114–125 (LTNQRVRATSTT). The chain crosses the membrane as a helical span at residues 126 to 149 (PDIIIMSILLIQCLLGLSTIPFSA). The Periplasmic segment spans residues 150–183 (QYPDGSEMMKLVGWAQSIVTFRGGSSEMLNGVAF). A helical transmembrane segment spans residues 184 to 199 (VFRLHLVLGMTIFLLF). Heme b is bound by residues histidine 188 and histidine 206. Over 200–226 (PFTRLVHVWSAPFEYFTRRYQIVRSRR) the chain is Cytoplasmic.

In terms of assembly, dimer of heterotrimers each composed of an alpha, a beta and a gamma chain. Alpha and beta are catalytic chains; gamma chains are involved in binding the enzyme complex to the cytoplasmic membrane. It depends on heme as a cofactor.

The protein resides in the cell inner membrane. It carries out the reaction nitrate + a quinol = a quinone + nitrite + H2O. In terms of biological role, this is a second nitrate reductase enzyme which can substitute for the NRA enzyme and allows E.coli to use nitrate as an electron acceptor during anaerobic growth. The gamma chain is a membrane-embedded heme-iron unit resembling cytochrome b, which transfers electrons from quinones to the beta subunit. The chain is Respiratory nitrate reductase 2 gamma chain (narV) from Escherichia coli (strain K12).